Here is a 260-residue protein sequence, read N- to C-terminus: Thiazole synthase (260 aa).

Catalysis depends on lysine 102, which acts as the Schiff-base intermediate with DXP. 1-deoxy-D-xylulose 5-phosphate-binding positions include glycine 163, 189–190 (AG), and 211–212 (NT).

This sequence belongs to the ThiG family. As to quaternary structure, homotetramer. Forms heterodimers with either ThiH or ThiS.

The protein resides in the cytoplasm. The catalysed reaction is [ThiS sulfur-carrier protein]-C-terminal-Gly-aminoethanethioate + 2-iminoacetate + 1-deoxy-D-xylulose 5-phosphate = [ThiS sulfur-carrier protein]-C-terminal Gly-Gly + 2-[(2R,5Z)-2-carboxy-4-methylthiazol-5(2H)-ylidene]ethyl phosphate + 2 H2O + H(+). The protein operates within cofactor biosynthesis; thiamine diphosphate biosynthesis. Functionally, catalyzes the rearrangement of 1-deoxy-D-xylulose 5-phosphate (DXP) to produce the thiazole phosphate moiety of thiamine. Sulfur is provided by the thiocarboxylate moiety of the carrier protein ThiS. In vitro, sulfur can be provided by H(2)S. The sequence is that of Thiazole synthase from Geobacter sp. (strain M21).